A 245-amino-acid chain; its full sequence is 1-(5-phosphoribosyl)-5-[(5-phosphoribosylamino)methylideneamino] imidazole-4-carboxamide isomerase (245 aa).

The Proton acceptor role is filled by D7. The active-site Proton donor is D129.

Belongs to the HisA/HisF family.

It localises to the cytoplasm. The enzyme catalyses 1-(5-phospho-beta-D-ribosyl)-5-[(5-phospho-beta-D-ribosylamino)methylideneamino]imidazole-4-carboxamide = 5-[(5-phospho-1-deoxy-D-ribulos-1-ylimino)methylamino]-1-(5-phospho-beta-D-ribosyl)imidazole-4-carboxamide. It functions in the pathway amino-acid biosynthesis; L-histidine biosynthesis; L-histidine from 5-phospho-alpha-D-ribose 1-diphosphate: step 4/9. In Escherichia coli O6:K15:H31 (strain 536 / UPEC), this protein is 1-(5-phosphoribosyl)-5-[(5-phosphoribosylamino)methylideneamino] imidazole-4-carboxamide isomerase.